A 500-amino-acid polypeptide reads, in one-letter code: Histidinol dehydrogenase homolog 1 (500 aa).

The segment at 1–25 (MPPAGGIFHRPPTTRKSRRLTPRSA) is disordered. Over residues 12-21 (PTTRKSRRLT) the composition is skewed to basic residues. Residues Gln313 and His316 each contribute to the Zn(2+) site. Catalysis depends on proton acceptor residues Glu381 and His382. Zn(2+)-binding residues include Asp415 and His475.

This sequence belongs to the histidinol dehydrogenase family. Zn(2+) is required as a cofactor.

This chain is Histidinol dehydrogenase homolog 1, found in Mesorhizobium japonicum (strain LMG 29417 / CECT 9101 / MAFF 303099) (Mesorhizobium loti (strain MAFF 303099)).